The primary structure comprises 246 residues: Major prion protein (246 aa).

An N-terminal signal peptide occupies residues 1–15; that stretch reads MLVLFVATWSDLGLC. Positions 16–223 are interaction with GRB2, ERI3 and SYN1; sequence KKRPKPGGWN…ESQAYYQRGS (208 aa). The tract at residues 18–102 is disordered; that stretch reads RPKPGGWNTG…HKPSKPKTSM (85 aa). 5 tandem repeats follow at residues 44-52, 53-60, 61-68, 69-76, and 77-84. A 5 X 8 AA tandem repeats of P-H-G-G-G-W-G-Q region spans residues 44 to 84; that stretch reads PQGGGGWGQPHGGGWGQPHGGGWGQPHGGGWGQPHGGGWGQ. The span at 45 to 88 shows a compositional bias: gly residues; the sequence is QGGGGWGQPHGGGWGQPHGGGWGQPHGGGWGQPHGGGWGQGGGT. Residues H54, G55, G56, H62, G63, G64, H70, G71, G72, H78, G79, and G80 each coordinate Cu(2+). The segment covering 91–102 has biased composition (basic residues); the sequence is QWHKPSKPKTSM. An intrachain disulfide couples C172 to C207. N-linked (GlcNAc...) asparagine glycans are attached at residues N174 and N190. A lipid anchor (GPI-anchor amidated serine) is attached at S223. Positions 224–246 are cleaved as a propeptide — removed in mature form; that stretch reads SMVLFSSPPVILLISFLIFLIVG.

Belongs to the prion family. As to quaternary structure, monomer and homodimer. Has a tendency to aggregate into amyloid fibrils containing a cross-beta spine, formed by a steric zipper of superposed beta-strands. Soluble oligomers may represent an intermediate stage on the path to fibril formation. Copper binding may promote oligomerization. Interacts with GRB2, APP, ERI3/PRNPIP and SYN1. Mislocalized cytosolically exposed PrP interacts with MGRN1; this interaction alters MGRN1 subcellular location and causes lysosomal enlargement. Interacts with KIAA1191.

The protein resides in the cell membrane. It is found in the golgi apparatus. Functionally, its primary physiological function is unclear. Has cytoprotective activity against internal or environmental stresses. May play a role in neuronal development and synaptic plasticity. May be required for neuronal myelin sheath maintenance. May play a role in iron uptake and iron homeostasis. Soluble oligomers are toxic to cultured neuroblastoma cells and induce apoptosis (in vitro). Association with GPC1 (via its heparan sulfate chains) targets PRNP to lipid rafts. Also provides Cu(2+) or Zn(2+) for the ascorbate-mediated GPC1 deaminase degradation of its heparan sulfate side chains. The sequence is that of Major prion protein (PRNP) from Cercopithecus mona (Mona monkey).